We begin with the raw amino-acid sequence, 339 residues long: Nitrilase (339 aa).

The region spanning 7 to 277 (YRVAAVQASP…EGITYADIDL (271 aa)) is the CN hydrolase domain. Residue glutamate 47 is the Proton acceptor of the active site. The Proton donor role is filled by lysine 128. Cysteine 162 acts as the Nucleophile in catalysis.

It belongs to the carbon-nitrogen hydrolase superfamily. Nitrilase family.

It carries out the reaction a nitrile + 2 H2O = a carboxylate + NH4(+). The chain is Nitrilase (nit) from Bacillus sp. (strain OxB-1).